We begin with the raw amino-acid sequence, 342 residues long: Ribosomal RNA small subunit methyltransferase C (342 aa).

Belongs to the methyltransferase superfamily. RsmC family. Monomer.

The protein resides in the cytoplasm. The enzyme catalyses guanosine(1207) in 16S rRNA + S-adenosyl-L-methionine = N(2)-methylguanosine(1207) in 16S rRNA + S-adenosyl-L-homocysteine + H(+). Specifically methylates the guanine in position 1207 of 16S rRNA in the 30S particle. This is Ribosomal RNA small subunit methyltransferase C from Hahella chejuensis (strain KCTC 2396).